A 425-amino-acid polypeptide reads, in one-letter code: Serine--tRNA ligase (425 aa).

230 to 232 (TAE) is a binding site for L-serine. 261 to 263 (RSE) lines the ATP pocket. L-serine is bound at residue glutamate 284. 348–351 (EISS) is an ATP binding site. Serine 384 lines the L-serine pocket.

Belongs to the class-II aminoacyl-tRNA synthetase family. Type-1 seryl-tRNA synthetase subfamily. Homodimer. The tRNA molecule binds across the dimer.

The protein localises to the cytoplasm. It catalyses the reaction tRNA(Ser) + L-serine + ATP = L-seryl-tRNA(Ser) + AMP + diphosphate + H(+). It carries out the reaction tRNA(Sec) + L-serine + ATP = L-seryl-tRNA(Sec) + AMP + diphosphate + H(+). It participates in aminoacyl-tRNA biosynthesis; selenocysteinyl-tRNA(Sec) biosynthesis; L-seryl-tRNA(Sec) from L-serine and tRNA(Sec): step 1/1. Catalyzes the attachment of serine to tRNA(Ser). Is also able to aminoacylate tRNA(Sec) with serine, to form the misacylated tRNA L-seryl-tRNA(Sec), which will be further converted into selenocysteinyl-tRNA(Sec). This is Serine--tRNA ligase from Streptococcus pyogenes serotype M12 (strain MGAS2096).